We begin with the raw amino-acid sequence, 334 residues long: tRNA N6-adenosine threonylcarbamoyltransferase (334 aa).

Positions 112 and 116 each coordinate Fe cation. Substrate contacts are provided by residues 135 to 139 (VVSGG), aspartate 168, glycine 181, aspartate 185, and asparagine 274. Fe cation is bound at residue aspartate 303.

The protein belongs to the KAE1 / TsaD family. It depends on Fe(2+) as a cofactor.

The protein localises to the cytoplasm. It carries out the reaction L-threonylcarbamoyladenylate + adenosine(37) in tRNA = N(6)-L-threonylcarbamoyladenosine(37) in tRNA + AMP + H(+). Required for the formation of a threonylcarbamoyl group on adenosine at position 37 (t(6)A37) in tRNAs that read codons beginning with adenine. Is involved in the transfer of the threonylcarbamoyl moiety of threonylcarbamoyl-AMP (TC-AMP) to the N6 group of A37, together with TsaE and TsaB. TsaD likely plays a direct catalytic role in this reaction. This is tRNA N6-adenosine threonylcarbamoyltransferase from Anaeromyxobacter dehalogenans (strain 2CP-C).